The chain runs to 205 residues: Leucyl/phenylalanyl-tRNA--protein transferase (205 aa).

Belongs to the L/F-transferase family.

It localises to the cytoplasm. It carries out the reaction N-terminal L-lysyl-[protein] + L-leucyl-tRNA(Leu) = N-terminal L-leucyl-L-lysyl-[protein] + tRNA(Leu) + H(+). It catalyses the reaction N-terminal L-arginyl-[protein] + L-leucyl-tRNA(Leu) = N-terminal L-leucyl-L-arginyl-[protein] + tRNA(Leu) + H(+). The enzyme catalyses L-phenylalanyl-tRNA(Phe) + an N-terminal L-alpha-aminoacyl-[protein] = an N-terminal L-phenylalanyl-L-alpha-aminoacyl-[protein] + tRNA(Phe). In terms of biological role, functions in the N-end rule pathway of protein degradation where it conjugates Leu, Phe and, less efficiently, Met from aminoacyl-tRNAs to the N-termini of proteins containing an N-terminal arginine or lysine. This chain is Leucyl/phenylalanyl-tRNA--protein transferase, found in Mesorhizobium japonicum (strain LMG 29417 / CECT 9101 / MAFF 303099) (Mesorhizobium loti (strain MAFF 303099)).